The sequence spans 2353 residues: Nonribosomal peptide synthetase 7 (2353 aa).

The interval 305–684 (TFSALNTRAN…AIEEVEDSAV (380 aa)) is adenylation 1. The Carrier 1 domain occupies 776 to 853 (RDLTDSEKVV…QVAAAVQPQP (78 aa)). Ser-813 carries the post-translational modification O-(pantetheine 4'-phosphoryl)serine. The tract at residues 885 to 1147 (EDAFPVTPFQ…LMVAPLRVKV (263 aa)) is condensation 1. Residues 1338–1725 (TYAGLAIKMN…QTNVFRQCAV (388 aa)) are adenylation 2. Positions 1826–1902 (EICSEAEREL…EQAALMVQGQ (77 aa)) constitute a Carrier 2 domain. An O-(pantetheine 4'-phosphoryl)serine modification is found at Ser-1863. The interval 1939–2214 (EDIYPCSPGQ…NGNCANFLPY (276 aa)) is condensation 2.

The protein belongs to the NRP synthetase family.

In terms of biological role, nonribosomal peptide synthesis (NRPS) is a key mechanism responsible for the biosynthesis of bioactive metabolites which are potentially contributing to organismal virulence. The polypeptide is Nonribosomal peptide synthetase 7 (NRPS7) (Aspergillus fumigatus (strain ATCC MYA-4609 / CBS 101355 / FGSC A1100 / Af293) (Neosartorya fumigata)).